A 91-amino-acid chain; its full sequence is Small ribosomal subunit protein bS16 (91 aa).

The protein belongs to the bacterial ribosomal protein bS16 family.

The chain is Small ribosomal subunit protein bS16 from Staphylococcus epidermidis (strain ATCC 35984 / DSM 28319 / BCRC 17069 / CCUG 31568 / BM 3577 / RP62A).